A 458-amino-acid polypeptide reads, in one-letter code: Argininosuccinate lyase (458 aa).

The protein belongs to the lyase 1 family. Argininosuccinate lyase subfamily.

The protein resides in the cytoplasm. It carries out the reaction 2-(N(omega)-L-arginino)succinate = fumarate + L-arginine. Its pathway is amino-acid biosynthesis; L-arginine biosynthesis; L-arginine from L-ornithine and carbamoyl phosphate: step 3/3. The chain is Argininosuccinate lyase from Salmonella dublin (strain CT_02021853).